The sequence spans 138 residues: Large ribosomal subunit protein uL16 (138 aa).

This sequence belongs to the universal ribosomal protein uL16 family. In terms of assembly, part of the 50S ribosomal subunit.

Functionally, binds 23S rRNA and is also seen to make contacts with the A and possibly P site tRNAs. This is Large ribosomal subunit protein uL16 from Neisseria gonorrhoeae (strain ATCC 700825 / FA 1090).